A 429-amino-acid polypeptide reads, in one-letter code: Probable M18 family aminopeptidase 2 (429 aa).

Residues His82, His156, and His401 each coordinate Zn(2+).

This sequence belongs to the peptidase M18 family. Zn(2+) is required as a cofactor.

This chain is Probable M18 family aminopeptidase 2, found in Pseudomonas savastanoi pv. phaseolicola (strain 1448A / Race 6) (Pseudomonas syringae pv. phaseolicola (strain 1448A / Race 6)).